Consider the following 1385-residue polypeptide: DNA-directed RNA polymerase subunit beta' (1385 aa).

Residues C75, C77, C90, and C93 each coordinate Zn(2+). Positions 466, 468, and 470 each coordinate Mg(2+). Residues C809, C883, C890, and C893 each coordinate Zn(2+).

It belongs to the RNA polymerase beta' chain family. In terms of assembly, the RNAP catalytic core consists of 2 alpha, 1 beta, 1 beta' and 1 omega subunit. When a sigma factor is associated with the core the holoenzyme is formed, which can initiate transcription. Mg(2+) serves as cofactor. The cofactor is Zn(2+).

It catalyses the reaction RNA(n) + a ribonucleoside 5'-triphosphate = RNA(n+1) + diphosphate. In terms of biological role, DNA-dependent RNA polymerase catalyzes the transcription of DNA into RNA using the four ribonucleoside triphosphates as substrates. This is DNA-directed RNA polymerase subunit beta' from Nitratidesulfovibrio vulgaris (strain ATCC 29579 / DSM 644 / CCUG 34227 / NCIMB 8303 / VKM B-1760 / Hildenborough) (Desulfovibrio vulgaris).